Reading from the N-terminus, the 82-residue chain is Large ribosomal subunit protein uL24c (82 aa).

Belongs to the universal ribosomal protein uL24 family. Part of the 50S ribosomal subunit.

The protein resides in the plastid. It localises to the chloroplast. In terms of biological role, one of two assembly initiator proteins, it binds directly to the 5'-end of the 23S rRNA, where it nucleates assembly of the 50S subunit. The polypeptide is Large ribosomal subunit protein uL24c (rpl24) (Phaeodactylum tricornutum (strain CCAP 1055/1)).